The sequence spans 505 residues: Gap junction alpha-10 protein (505 aa).

Residues 1–16 (MGDWNLLGGILEEVHS) are Cytoplasmic-facing. Residues 17-37 (HSTIVGKIWLTILFIFRMLVL) traverse the membrane as a helical segment. Residues 38–76 (GVAAEDVWDDEQSAFACNTQQPGCNNICYDDAFPISLIR) lie on the Extracellular side of the membrane. Residues 77-97 (FWVLQIIFVSSPSLVYMGHAL) traverse the membrane as a helical segment. At 98–165 (YRLRDFEKQR…TYVLHILTRS (68 aa)) the chain is on the cytoplasmic side. The helical transmembrane segment at 166-186 (VLEVGFMIGQYILYGFQMHPI) threads the bilayer. Topologically, residues 187–209 (YKCTQAPCPNSVDCFVSRPTEKT) are extracellular. The chain crosses the membrane as a helical span at residues 210–230 (IFMLFMHSIAAISLLLNILEI). The Cytoplasmic portion of the chain corresponds to 231–505 (FHLGIRKIMR…IIHETYVYVY (275 aa)). The segment covering 371–383 (TMTASQHRPSSAL) has biased composition (polar residues). The tract at residues 371–491 (TMTASQHRPS…SKSSHVDSPP (121 aa)) is disordered. Residues 437–446 (MSEKGQRHSD) are compositionally biased toward basic and acidic residues. The segment covering 447–460 (SGSSRSLNSSCLDF) has biased composition (low complexity).

It belongs to the connexin family. Alpha-type (group II) subfamily. A connexon is composed of a hexamer of connexins. In terms of tissue distribution, low levels were detected in skin, heart, kidney, testis, ovary, intestine. Expression not detected in brain, sciatic nerve or liver. According to PubMed:15147297 expression is detected only in horizontal cells in the inner nuclear layer of the retina and not in other neurons of the central nervous system or tissues. Detected in the outer plexiform layer of the retina (at protein level).

It localises to the cell membrane. The protein localises to the cell junction. It is found in the gap junction. One gap junction consists of a cluster of closely packed pairs of transmembrane channels, the connexons, through which materials of low MW diffuse from one cell to a neighboring cell. Involved in tracer coupling between horizontal cells of the retina. May play a role in the regulation of horizontal cell patterning. This is Gap junction alpha-10 protein (Gja10) from Mus musculus (Mouse).